Consider the following 379-residue polypeptide: Transcription factor TIP2 (379 aa).

Residues 144-184 are disordered; sequence MVGPFESSPTPRSGGGRKRSRATAGFHGGGPANGVEKKEKQ. The basic motif; degenerate stretch occupies residues 173–186; it reads GPANGVEKKEKQRR. Residues 173 to 222 enclose the bHLH domain; sequence GPANGVEKKEKQRRLRLTEKYNALMLLIPNRTKEDRATVISDAIEYIQEL. Positions 187 to 222 are helix-loop-helix motif; that stretch reads LRLTEKYNALMLLIPNRTKEDRATVISDAIEYIQEL.

Belongs to the bHLH protein family. In terms of assembly, homodimer. Interacts with TDR, but not with EAT1. In terms of tissue distribution, highly expressed in anthers; strong expression in the middle layer and tapetum, and weak expression in the endothecium.

It localises to the nucleus. In terms of biological role, transcription factor that binds to the E-box-containing promoter regions of the transcription factors TDR and EAT1, activating their expression. May have a role in specifying the cell pattern of the inner anther walls and functioning in meiosis progression. Required for male reproduction. Acts downstream of UDT1 and GAMYB, but upstream of TDR1 and EAT1 in pollen development. In Oryza sativa subsp. japonica (Rice), this protein is Transcription factor TIP2 (TIP2).